The following is a 108-amino-acid chain: uncharacterized protein (108 aa).

Positions 39–68 (GLRSRSGTGSGNSRNGLKESGGSRSGPGKP) are enriched in low complexity. The disordered stretch occupies residues 39-95 (GLRSRSGTGSGNSRNGLKESGGSRSGPGKPRGNRKSSRRIRPRPTSEKPRGYWRSSW). The span at 69–80 (RGNRKSSRRIRP) shows a compositional bias: basic residues.

This is an uncharacterized protein from Acidithiobacillus ferridurans.